The following is an 82-amino-acid chain: Omega-conotoxin-like TxMKLT1-031 (82 aa).

Residues 1 to 22 (MKLTCMMIVAVLFLTAWTLVMA) form the signal peptide. Residues 23 to 49 (DDSNNGLANLFSKSRDEMEDPEASKLE) constitute a propeptide that is removed on maturation. 3 cysteine pairs are disulfide-bonded: cysteine 53–cysteine 71, cysteine 60–cysteine 76, and cysteine 70–cysteine 81.

This sequence belongs to the conotoxin O1 superfamily. As to expression, expressed by the venom duct.

It localises to the secreted. Its function is as follows. Omega-conotoxins act at presynaptic membranes, they bind and block voltage-gated calcium channels (Cav). The polypeptide is Omega-conotoxin-like TxMKLT1-031 (Conus textile (Cloth-of-gold cone)).